The sequence spans 382 residues: Glutaminyl-peptide cyclotransferase-like protein (382 aa).

The chain crosses the membrane as a helical span at residues 35-55; sequence LLPLLLALAVGSAFYTIWSGW. Cysteines 167 and 191 form a disulfide. Asp-186 is a Zn(2+) binding site. Residue Glu-225 is the Proton acceptor of the active site. Glu-226 contributes to the Zn(2+) binding site. The active-site Proton acceptor is Asp-269. His-351 contributes to the Zn(2+) binding site.

The protein belongs to the glutaminyl-peptide cyclotransferase family.

The protein resides in the golgi apparatus membrane. The enzyme catalyses N-terminal L-glutaminyl-[peptide] = N-terminal 5-oxo-L-prolyl-[peptide] + NH4(+). Functionally, responsible for the biosynthesis of pyroglutamyl peptides. The protein is Glutaminyl-peptide cyclotransferase-like protein (QPCTL) of Macaca fascicularis (Crab-eating macaque).